Here is a 327-residue protein sequence, read N- to C-terminus: 2-methoxy-6-polyprenyl-1,4-benzoquinol methylase, mitochondrial (327 aa).

The N-terminal 49 residues, 1–49 (MAAPRSCVLWSYCGHGWSRLAGDCRLPGFRRSWLGATLSARSLSQEKRA), are a transit peptide targeting the mitochondrion. Residues Thr-117, Asp-171, and 199–200 (DA) contribute to the S-adenosyl-L-methionine site.

This sequence belongs to the class I-like SAM-binding methyltransferase superfamily. MenG/UbiE family. As to quaternary structure, component of a multi-subunit COQ enzyme complex, composed of at least COQ3, COQ4, COQ5, COQ6, COQ7 and COQ9. Interacts with PYURF; the interaction is direct, stabilizes COQ5 protein and associates PYURF with COQ enzyme complex.

It is found in the mitochondrion inner membrane. The enzyme catalyses 2-methoxy-6-(all-trans-decaprenyl)benzene-1,4-diol + S-adenosyl-L-methionine = 5-methoxy-2-methyl-3-(all-trans-decaprenyl)benzene-1,4-diol + S-adenosyl-L-homocysteine + H(+). It participates in cofactor biosynthesis; ubiquinone biosynthesis. Its function is as follows. Methyltransferase required for the conversion of 2-decaprenyl-6-methoxy-1,4-benzoquinol (DDMQH2) to 2-decaprenyl-3-methyl-6-methoxy-1,4-benzoquinol (DMQH2). The polypeptide is 2-methoxy-6-polyprenyl-1,4-benzoquinol methylase, mitochondrial (Rattus norvegicus (Rat)).